Reading from the N-terminus, the 87-residue chain is Beta-toxin Cn4 (87 aa).

An N-terminal signal peptide occupies residues 1–19; sequence MNSLLMITACLALVGTVWA. An LCN-type CS-alpha/beta domain is found at 20–85; it reads KEGYLVNSYT…VWPLKNKTCN (66 aa). 4 disulfide bridges follow: Cys31–Cys84, Cys35–Cys60, Cys44–Cys65, and Cys48–Cys67. Asn85 carries the asparagine amide modification.

The protein belongs to the long (4 C-C) scorpion toxin superfamily. Sodium channel inhibitor family. Beta subfamily. In terms of tissue distribution, expressed by the venom gland.

It is found in the secreted. Beta toxins bind voltage-independently at site-4 of sodium channels (Nav) and shift the voltage of activation toward more negative potentials thereby affecting sodium channel activation and promoting spontaneous and repetitive firing. This toxin affects the activation mechanism of sodium channels of squid axon. It also competes with Cn2 in rat brain synaptosomes. Is lethal to mice. The protein is Beta-toxin Cn4 of Centruroides noxius (Mexican scorpion).